Here is a 508-residue protein sequence, read N- to C-terminus: Probable protein kinase UbiB (508 aa).

In terms of domain architecture, Protein kinase spans 118–494 (DFDLKPVASA…QKRQNFLLLL (377 aa)). Residues 124–132 (VASASVAQV) and Lys-151 each bind ATP. Asp-286 acts as the Proton acceptor in catalysis. Residues 488-508 (QNFLLLLIAILLAALLAKSLL) traverse the membrane as a helical segment.

Belongs to the ABC1 family. UbiB subfamily.

The protein resides in the cell inner membrane. Its pathway is cofactor biosynthesis; ubiquinone biosynthesis [regulation]. Functionally, is probably a protein kinase regulator of UbiI activity which is involved in aerobic coenzyme Q (ubiquinone) biosynthesis. In Chromobacterium violaceum (strain ATCC 12472 / DSM 30191 / JCM 1249 / CCUG 213 / NBRC 12614 / NCIMB 9131 / NCTC 9757 / MK), this protein is Probable protein kinase UbiB.